A 201-amino-acid polypeptide reads, in one-letter code: FMN-dependent NADH:quinone oxidoreductase (201 aa).

Residues serine 10, 16–18 (SQS), 96–99 (MYNF), and 140–143 (SRGG) each bind FMN.

Belongs to the azoreductase type 1 family. Homodimer. FMN is required as a cofactor.

It carries out the reaction 2 a quinone + NADH + H(+) = 2 a 1,4-benzosemiquinone + NAD(+). It catalyses the reaction N,N-dimethyl-1,4-phenylenediamine + anthranilate + 2 NAD(+) = 2-(4-dimethylaminophenyl)diazenylbenzoate + 2 NADH + 2 H(+). Its function is as follows. Quinone reductase that provides resistance to thiol-specific stress caused by electrophilic quinones. Functionally, also exhibits azoreductase activity. Catalyzes the reductive cleavage of the azo bond in aromatic azo compounds to the corresponding amines. The chain is FMN-dependent NADH:quinone oxidoreductase from Salmonella arizonae (strain ATCC BAA-731 / CDC346-86 / RSK2980).